Here is a 757-residue protein sequence, read N- to C-terminus: Probable phospholipase C20G8.02, mitochondrial (757 aa).

The N-terminal 13 residues, 1-13 (MILYIVLPFYVRT), are a transit peptide targeting the mitochondrion. Residues 289 to 330 (ESNSKPSTPVPTEELTSTTLLNDSSDPSDNFTPSNTESTIDL) are disordered. Residues 302-329 (ELTSTTLLNDSSDPSDNFTPSNTESTID) show a composition bias toward polar residues. S524 is a catalytic residue. Residues 547 to 757 (LDFPVANFFA…LAHFILTQLL (211 aa)) form the DDHD domain.

It belongs to the PA-PLA1 family.

It is found in the mitochondrion. Functionally, probable phospholipase that hydrolyzes phosphatidic acid. The protein is Probable phospholipase C20G8.02, mitochondrial of Schizosaccharomyces pombe (strain 972 / ATCC 24843) (Fission yeast).